A 201-amino-acid chain; its full sequence is Small ribosomal subunit protein uS4c (201 aa).

The disordered stretch occupies residues 15 to 44; that stretch reads LGSLPGLTSKRPTVKSELRNQSRSSKKSQY. The S4 RNA-binding domain maps to 89 to 151; it reads MRLDNILFRL…QKSKTLIQNY (63 aa).

The protein belongs to the universal ribosomal protein uS4 family. Part of the 30S ribosomal subunit. Contacts protein S5. The interaction surface between S4 and S5 is involved in control of translational fidelity.

The protein localises to the plastid. Its subcellular location is the chloroplast. One of the primary rRNA binding proteins, it binds directly to 16S rRNA where it nucleates assembly of the body of the 30S subunit. Its function is as follows. With S5 and S12 plays an important role in translational accuracy. This chain is Small ribosomal subunit protein uS4c (rps4), found in Glycine max (Soybean).